Reading from the N-terminus, the 84-residue chain is MERNLRKKRLGRVVSDKMDKTIVVAVETKVRHPLYGKTVNRTTKFKAHDENNEARFGDRVFIMETRPLSKDKRWRLVEIVEKAK.

The protein belongs to the universal ribosomal protein uS17 family. Part of the 30S ribosomal subunit.

Functionally, one of the primary rRNA binding proteins, it binds specifically to the 5'-end of 16S ribosomal RNA. The chain is Small ribosomal subunit protein uS17 from Clostridium perfringens (strain SM101 / Type A).